A 678-amino-acid chain; its full sequence is Glycine--tRNA ligase beta subunit (678 aa).

This sequence belongs to the class-II aminoacyl-tRNA synthetase family. In terms of assembly, tetramer of two alpha and two beta subunits.

Its subcellular location is the cytoplasm. The enzyme catalyses tRNA(Gly) + glycine + ATP = glycyl-tRNA(Gly) + AMP + diphosphate. The sequence is that of Glycine--tRNA ligase beta subunit from Streptococcus thermophilus (strain ATCC BAA-491 / LMD-9).